Consider the following 287-residue polypeptide: Polyamine aminopropyltransferase (287 aa).

In terms of domain architecture, PABS spans 5–238 (EIWYETLHAN…GIMTFAWASN (234 aa)). S-methyl-5'-thioadenosine is bound at residue Gln33. 2 residues coordinate spermidine: His64 and Asp88. S-methyl-5'-thioadenosine-binding positions include Glu108 and 140 to 141 (DG). Catalysis depends on Asp158, which acts as the Proton acceptor. 158-161 (DCTD) contributes to the spermidine binding site. An S-methyl-5'-thioadenosine-binding site is contributed by Pro165.

It belongs to the spermidine/spermine synthase family. As to quaternary structure, homodimer or homotetramer.

Its subcellular location is the cytoplasm. It catalyses the reaction S-adenosyl 3-(methylsulfanyl)propylamine + putrescine = S-methyl-5'-thioadenosine + spermidine + H(+). The protein operates within amine and polyamine biosynthesis; spermidine biosynthesis; spermidine from putrescine: step 1/1. Catalyzes the irreversible transfer of a propylamine group from the amino donor S-adenosylmethioninamine (decarboxy-AdoMet) to putrescine (1,4-diaminobutane) to yield spermidine. The chain is Polyamine aminopropyltransferase from Pectobacterium carotovorum subsp. carotovorum (strain PC1).